The sequence spans 313 residues: Calcyphosin-2 (313 aa).

EF-hand domains are found at residues R144–E179, V180–E215, and Y216–S251. Residues D193, N195, N197, K199, and E204 each coordinate Ca(2+).

This is Calcyphosin-2 (CAPS2) from Macaca fascicularis (Crab-eating macaque).